Consider the following 328-residue polypeptide: Ribosomal protein L11 methyltransferase (328 aa).

Residues Thr153, Gly174, Asp196, and Asn263 each coordinate S-adenosyl-L-methionine.

It belongs to the methyltransferase superfamily. PrmA family.

Its subcellular location is the cytoplasm. It catalyses the reaction L-lysyl-[protein] + 3 S-adenosyl-L-methionine = N(6),N(6),N(6)-trimethyl-L-lysyl-[protein] + 3 S-adenosyl-L-homocysteine + 3 H(+). Methylates ribosomal protein L11. The protein is Ribosomal protein L11 methyltransferase of Chloroflexus aurantiacus (strain ATCC 29366 / DSM 635 / J-10-fl).